A 418-amino-acid chain; its full sequence is MLHPRARTMLLLSLPAVAIGIASSLILIMVMKIASVLQNLLWQRLPGTLGIAQDSPLWIIGVLTLTGIAVGLVIRFSQGHAGPDPACEPLIGAPVPPSALPGLIVALILGLAGGVSLGPEHPIMTVNIALAVAIGARLLPRVNRMEWTILASAGTIGALFGTPVAAALIFSQTLNGSNEVPLWDRLFAPLMAAAAGALTTGLFFHPHFSLPIAHYGQMEMTDILSGAIVAAIAIAAGMVAVWCLPRLHAMMHQMKNPVFVLGIGGLILGILGVIGGPVSLFKGLDEMQQMVANQAFSTSDYFLLAVIKLAALVVAAASGFRGGRIFPAVFVGVALGLMLHEHVPAVPAAITVSCAILGIVLVVTRDGWLSLFMAAVVVPNTTLLPLLCIVMLPAWLLLAGKPMMMVNRQKQQPPHDNV.

The next 12 helical transmembrane spans lie at 10-30 (LLLS…LIMV), 54-74 (DSPL…GLVI), 99-119 (ALPG…SLGP), 120-140 (EHPI…RLLP), 149-169 (ILAS…AALI), 186-206 (LFAP…FFHP), 223-243 (ILSG…AVWC), 258-278 (VFVL…GGPV), 300-320 (DYFL…ASGF), 322-342 (GGRI…LHEH), 343-363 (VPAV…VLVV), and 371-391 (LFMA…CIVM).

The protein belongs to the chloride channel (TC 2.A.49) family.

Its subcellular location is the cell membrane. The sequence is that of Putative ion-transport protein YfeO from Escherichia coli O45:K1 (strain S88 / ExPEC).